Here is a 425-residue protein sequence, read N- to C-terminus: Pyruvate dehydrogenase E1 component subunit alpha-3, chloroplastic (425 aa).

Residues 1–66 constitute a chloroplast transit peptide; it reads MAAASSFTAA…VLPGNKAAPA (66 aa). Positions 109, 135, 136, 184, 186, 224, 225, and 253 each coordinate pyruvate. Tyrosine 135, arginine 136, alanine 184, isoleucine 186, aspartate 224, glycine 225, asparagine 253, and histidine 322 together coordinate thiamine diphosphate. Aspartate 224 is a binding site for Mg(2+). Residue asparagine 253 participates in Mg(2+) binding.

Tetramer of 2 alpha and 2 beta subunits. The cofactor is thiamine diphosphate. It depends on Mg(2+) as a cofactor.

It is found in the plastid. The protein localises to the chloroplast. It carries out the reaction N(6)-[(R)-lipoyl]-L-lysyl-[protein] + pyruvate + H(+) = N(6)-[(R)-S(8)-acetyldihydrolipoyl]-L-lysyl-[protein] + CO2. Its function is as follows. The pyruvate dehydrogenase complex catalyzes the overall conversion of pyruvate to acetyl-CoA and CO(2). It contains multiple copies of three enzymatic components: pyruvate dehydrogenase (E1), dihydrolipoamide acetyltransferase (E2) and lipoamide dehydrogenase (E3). This Oryza sativa subsp. japonica (Rice) protein is Pyruvate dehydrogenase E1 component subunit alpha-3, chloroplastic.